The primary structure comprises 104 residues: Histone H4 (104 aa).

A disordered region spans residues 1-21 (MAGRGKVGKGYGKVGAKRHTK).

The protein belongs to the histone H4 family. In terms of assembly, the nucleosome is a histone octamer containing two molecules each of H2A, H2B, H3 and H4 assembled in one H3-H4 heterotetramer and two H2A-H2B heterodimers. The octamer wraps approximately 147 bp of DNA.

Its subcellular location is the nucleus. The protein resides in the chromosome. Functionally, core component of nucleosome. Nucleosomes wrap and compact DNA into chromatin, limiting DNA accessibility to the cellular machineries which require DNA as a template. Histones thereby play a central role in transcription regulation, DNA repair, DNA replication and chromosomal stability. DNA accessibility is regulated via a complex set of post-translational modifications of histones, also called histone code, and nucleosome remodeling. The protein is Histone H4 of Sterkiella nova (Ciliate).